A 176-amino-acid polypeptide reads, in one-letter code: Centromere protein R (176 aa).

K8 is covalently cross-linked (Glycyl lysine isopeptide (Lys-Gly) (interchain with G-Cter in SUMO2)). S17 carries the post-translational modification Phosphoserine. Residues 20-50 are DD1; the sequence is PSKIMRKKSITAFSPTTGTYQLSPFSSPRTP. Residue K22 forms a Glycyl lysine isopeptide (Lys-Gly) (interchain with G-Cter in SUMO2) linkage. Position 28 is a phosphoserine (S28). Residues 34-48 show a composition bias toward polar residues; it reads PTTGTYQLSPFSSPR. The segment at 34–80 is disordered; that stretch reads PTTGTYQLSPFSSPRTPKEQEHRDGPSNGTRKWSVLSSPARQDSTVK. Over residues 49-58 the composition is skewed to basic and acidic residues; it reads TPKEQEHRDG. Residues 60-80 show a composition bias toward polar residues; that stretch reads SNGTRKWSVLSSPARQDSTVK. The Nuclear localization signal motif lies at 63 to 66; sequence TRKW. Position 71 is a phosphoserine (S71). Positions 82-112 form a coiled coil; that stretch reads SDGFMMLLSKIERSSEKTMEIMKNLSSLQAL. The LXXLL motif signature appears at 118–122; sequence LEDLL. Residues 171 to 175 carry the LXXIL motif motif; that stretch reads LKAIL.

In terms of assembly, homodimer; mediated by the coiled coil domain. Interacts with CCNA2 and MTA1. Interacts with NFKB1 NF-kappa-B subunit. Component of the CENPA-CAD complex, composed of CENPI, CENPK, CENPL, CENPO, CENPP, CENPQ, CENPR and CENPS. The CENPA-CAD complex interacts with the CENPA-NAC complex, at least composed of CENPA, CENPC, CENPH, CENPM, CENPN, CENPT and CENPU. Interacts with TASOR.

It localises to the nucleus. It is found in the chromosome. Its subcellular location is the centromere. The protein resides in the kinetochore. In terms of biological role, transcription coregulator that can have both coactivator and corepressor functions. Involved in the coactivation of nuclear receptors for retinoid X (RXRs) and thyroid hormone (TRs) in a ligand-dependent fashion. In contrast, it does not coactivate nuclear receptors for retinoic acid, vitamin D, progesterone receptor, nor glucocorticoid. Acts as a coactivator for estrogen receptor alpha. Acts as a transcriptional corepressor via its interaction with the NFKB1 NF-kappa-B subunit, possibly by interfering with the transactivation domain of NFKB1. Induces apoptosis in breast cancer cells, but not in other cancer cells, via a caspase-2 mediated pathway that involves mitochondrial membrane permeabilization but does not require other caspases. May also act as an inhibitor of cyclin A-associated kinase. Also acts a component of the CENPA-CAD (nucleosome distal) complex, a complex recruited to centromeres which is involved in assembly of kinetochore proteins, mitotic progression and chromosome segregation. May be involved in incorporation of newly synthesized CENPA into centromeres via its interaction with the CENPA-NAC complex. This chain is Centromere protein R (Itgb3bp), found in Rattus norvegicus (Rat).